Consider the following 87-residue polypeptide: Acyl-CoA-binding protein (87 aa).

The residue at position 2 (Ser-2) is an N-acetylserine. The ACB domain maps to 2 to 87 (SQAEFDKAAE…VEELKKKYGI (86 aa)). Lys-8 is subject to N6-acetyllysine; alternate. Lys-8 carries the N6-succinyllysine; alternate modification. Lys-14 lines the an acyl-CoA pocket. Lys-17 bears the N6-succinyllysine mark. The residue at position 19 (Lys-19) is an N6-acetyllysine. Tyr-29 carries the post-translational modification Phosphotyrosine. An acyl-CoA is bound by residues 29 to 33 (YSHYK), Lys-51, Lys-55, and Tyr-74. Position 51 is an N6-acetyllysine (Lys-51). At Lys-55 the chain carries N6-acetyllysine; alternate. An N6-succinyllysine; alternate modification is found at Lys-55. An N6-(2-hydroxyisobutyryl)lysine; alternate modification is found at Lys-55. Position 55 is an N6-malonyllysine; alternate (Lys-55). At Lys-77 the chain carries N6-acetyllysine; alternate. Lys-77 is subject to N6-succinyllysine; alternate.

Belongs to the ACBP family. In terms of assembly, monomer.

It localises to the endoplasmic reticulum. The protein localises to the golgi apparatus. Functionally, binds medium- and long-chain acyl-CoA esters with very high affinity and may function as an intracellular carrier of acyl-CoA esters. In Chaetophractus villosus (South American armadillo), this protein is Acyl-CoA-binding protein (DBI).